The primary structure comprises 141 residues: ATP synthase epsilon chain (141 aa).

The protein belongs to the ATPase epsilon chain family. As to quaternary structure, F-type ATPases have 2 components, CF(1) - the catalytic core - and CF(0) - the membrane proton channel. CF(1) has five subunits: alpha(3), beta(3), gamma(1), delta(1), epsilon(1). CF(0) has three main subunits: a, b and c.

The protein localises to the cell inner membrane. Produces ATP from ADP in the presence of a proton gradient across the membrane. This is ATP synthase epsilon chain (atpC) from Acidithiobacillus ferridurans.